The chain runs to 80 residues: Large ribosomal subunit protein uL24 (80 aa).

The segment at 53 to 80 (HMKPTQSHPQGSIIEREFPIHASNVKKS) is disordered.

The protein belongs to the universal ribosomal protein uL24 family. Part of the 50S ribosomal subunit.

In terms of biological role, one of two assembly initiator proteins, it binds directly to the 5'-end of the 23S rRNA, where it nucleates assembly of the 50S subunit. Functionally, one of the proteins that surrounds the polypeptide exit tunnel on the outside of the subunit. The protein is Large ribosomal subunit protein uL24 of Chlorobium limicola (strain DSM 245 / NBRC 103803 / 6330).